The chain runs to 113 residues: Histidine triad nucleotide-binding protein (113 aa).

Zn(2+) contacts are provided by Cys5 and Cys8. An HIT domain is found at Ile6–Leu113. Residue Asp31 coordinates AMP. A Zn(2+)-binding site is contributed by His47. The AMP site is built by Asn86, Gly92, and Thr94. Zn(2+) is bound at residue His97. The Histidine triad motif motif lies at His97–His101. 2 residues coordinate AMP: His99 and His101. The active-site Tele-AMP-histidine intermediate is His99.

Belongs to the HINT family.

The protein localises to the nucleus. Its subcellular location is the cytoplasm. The catalysed reaction is adenosine 5'-phosphoramidate + H2O = AMP + NH4(+). Functionally, hydrolyzes purine nucleotide phosphoramidates with a single phosphate group, including adenosine 5'monophosphoramidate (AMP-NH2), adenosine 5'monophosphomorpholidate (AMP-morpholidate) and guanosine 5'monophosphomorpholidate (GMP-morpholidate). Hydrolyzes lysyl-AMP (AMP-N-epsilon-(N-alpha-acetyl lysine methyl ester)) generated by lysine tRNA ligase, as well as Met-AMP, His-AMP and Asp-AMP, lysyl-GMP (GMP-N-epsilon-(N-alpha-acetyl lysine methyl ester)) and AMP-N-alanine methyl ester. May also function as scaffolding protein that mediates protein-protein interactions. In Entamoeba histolytica (strain ATCC 30459 / HM-1:IMSS / ABRM), this protein is Histidine triad nucleotide-binding protein.